The primary structure comprises 306 residues: Ornithine carbamoyltransferase (306 aa).

Carbamoyl phosphate is bound by residues 53 to 56, Q80, R104, and 131 to 134; these read STRT and HPCQ. Residues N162, D220, and 224–225 each bind L-ornithine; that span reads SM. Residues 260-261 and R288 each bind carbamoyl phosphate; that span reads CL.

The protein belongs to the aspartate/ornithine carbamoyltransferase superfamily. OTCase family.

It is found in the cytoplasm. It carries out the reaction carbamoyl phosphate + L-ornithine = L-citrulline + phosphate + H(+). The protein operates within amino-acid biosynthesis; L-arginine biosynthesis; L-arginine from L-ornithine and carbamoyl phosphate: step 1/3. In terms of biological role, reversibly catalyzes the transfer of the carbamoyl group from carbamoyl phosphate (CP) to the N(epsilon) atom of ornithine (ORN) to produce L-citrulline. The polypeptide is Ornithine carbamoyltransferase (Methylobacillus flagellatus (strain ATCC 51484 / DSM 6875 / VKM B-1610 / KT)).